The following is a 411-amino-acid chain: MRLLSPVTGSKLVLLFLFLGAVRSDALKLNLTDSKGTCLYAEWEMNFTITYEALKVNETVTITVPDKVTYNGSSCGDDKNGAKIMIQYGSTLSWAVNFTKEASQYFINNITLSYNTNDTKTFPGAVPKGILTVIIPVGSQLPLGVIFKCSSVLTFNLSPVVQHYWGIHLQAFVQNGTVSKHEQVCKEDKTATTVAPIIHTTVPSPTTTLTPTSIPVPTPTVGNYTISNGNATCLLATMGLQLNITEEKVPFIFNINPAITNFTGSCQPQTAQLRLNNSQIKYLDFIFAVKNEKRFYLKEVNVNMYLANGSAFHVSNNNLSFWDAPLGSSYMCNKEQVVSVSRTFQINTFNLKVQPFNVTKGEYSTAQDCSADEDNFLVPIAVGAALGGVLILVLLAYFIGLKRHHTGYEQF.

Positions M1–A26 are cleaved as a signal peptide. The segment at L27–D188 is first lumenal domain. Topologically, residues L27–F376 are lumenal. Residues C38 and C75 are joined by a disulfide bond. N-linked (GlcNAc...) asparagine glycans are attached at residues N46, N57, N71, N97, N109, N117, N175, N223, N230, N243, N261, N276, N308, N318, and N357. A disulfide bond links C149 and C185. The segment at K189–G229 is hinge. A second lumenal domain region spans residues N230–F376. Cysteines 233 and 266 form a disulfide. A disulfide bond links C332 and C369. The helical transmembrane segment at L377 to G400 threads the bilayer. Residues L401–F411 lie on the Cytoplasmic side of the membrane. Residues K402 to H405 form an important for binding and subsequent lysosomal degradation of target proteins region.

This sequence belongs to the LAMP family. As to quaternary structure, monomer. Forms large homooligomers. Interacts (via its cytoplasmic region) with HSPA8; HSPA8 mediates recruitment of proteins with a KFERQ motif to the surface of the lysosome for chaperone-mediated autophagy. Interacts with HSP90 in the lysosome lumen; this enhances LAMP2 stability. Interacts with MLLT11. Interacts with ABCB9. Interacts with FURIN. Interacts with CT55; this interaction may be important for LAMP2 protein stability. Interacts with TMEM175; inhibiting the proton channel activity of TMEM175. Forms a ternary complex with RAB7A and RUFY4 (via RUN domain); the interaction with RAB7A is mediated by RUFY4 (via RUN and coiled coil domains). In terms of processing, extensively N-glycosylated. Contains a minor proportion of O-linked glycans. Contains sialylated glycans. As to expression, detected in liver, kidney, spleen and macrophages (at protein level).

Its subcellular location is the lysosome membrane. The protein localises to the endosome membrane. It is found in the cell membrane. The protein resides in the cytoplasmic vesicle. It localises to the autophagosome membrane. In terms of biological role, lysosomal membrane glycoprotein which plays an important role in lysosome biogenesis, lysosomal pH regulation and autophagy. Acts as an important regulator of lysosomal lumen pH regulation by acting as a direct inhibitor of the proton channel TMEM175, facilitating lysosomal acidification for optimal hydrolase activity. Plays an important role in chaperone-mediated autophagy, a process that mediates lysosomal degradation of proteins in response to various stresses and as part of the normal turnover of proteins with a long biological half-live. Functions by binding target proteins, such as GAPDH, NLRP3 and MLLT11, and targeting them for lysosomal degradation. In the chaperone-mediated autophagy, acts downstream of chaperones, such as HSPA8/HSC70, which recognize and bind substrate proteins and mediate their recruitment to lysosomes, where target proteins bind LAMP2. Plays a role in lysosomal protein degradation in response to starvation. Required for the fusion of autophagosomes with lysosomes during autophagy. Cells that lack LAMP2 express normal levels of VAMP8, but fail to accumulate STX17 on autophagosomes, which is the most likely explanation for the lack of fusion between autophagosomes and lysosomes. Required for normal degradation of the contents of autophagosomes. Required for efficient MHC class II-mediated presentation of exogenous antigens via its function in lysosomal protein degradation; antigenic peptides generated by proteases in the endosomal/lysosomal compartment are captured by nascent MHC II subunits. Is not required for efficient MHC class II-mediated presentation of endogenous antigens. The protein is Lysosome-associated membrane glycoprotein 2 (Lamp2) of Rattus norvegicus (Rat).